The chain runs to 217 residues: Adr-2-binding protein 1 (217 aa).

The disordered stretch occupies residues 33–65; it reads ARPEPQHDSLKRRNTTSSIAKKKAKMTRGDEQI. Residues 44–58 are compositionally biased toward basic residues; it reads RRNTTSSIAKKKAKM.

Interacts with double-stranded RNA-specific adenosine deaminase adr-2. Expressed in main body hypodermal cells, the hypodermal seam cells, pharynx, intestine and some neurons.

The protein resides in the nucleus. Its function is as follows. Required for the A-I editing activity of the double-stranded RNA-specific adenosine deaminase adr-2 by facilitating adr-2 nuclear localization. The polypeptide is Adr-2-binding protein 1 (Caenorhabditis elegans).